We begin with the raw amino-acid sequence, 63 residues long: Large ribosomal subunit protein bL32 (63 aa).

The protein belongs to the bacterial ribosomal protein bL32 family.

The chain is Large ribosomal subunit protein bL32 from Lacticaseibacillus paracasei (strain ATCC 334 / BCRC 17002 / CCUG 31169 / CIP 107868 / KCTC 3260 / NRRL B-441) (Lactobacillus paracasei).